The primary structure comprises 440 residues: Protein CANDIDATE G-PROTEIN COUPLED RECEPTOR 7 (440 aa).

The N-terminal stretch at 1 to 24 is a signal peptide; it reads MAKMPLSVVVFLLFSAAFLAVSMA. N-linked (GlcNAc...) asparagine glycosylation is found at asparagine 124 and asparagine 162. Helical transmembrane passes span 175–195, 207–227, 243–263, 281–301, and 315–335; these read LPTL…FWSY, IHLL…CAAE, ILFY…IILI, VLII…VIGE, and VFLL…VWSI. Residue asparagine 351 is glycosylated (N-linked (GlcNAc...) asparagine). Helical transmembrane passes span 363–383 and 390–410; these read IVVI…KTIA and VSFA…FHMF.

It belongs to the LU7TM family.

The protein localises to the membrane. In terms of biological role, plays a role in plants and microbes interactions. G-protein coupled receptor involved in root growth mediated by the bacterial quorum-sensing signals N-acyl-homoserine lactones (AHLs). The protein is Protein CANDIDATE G-PROTEIN COUPLED RECEPTOR 7 of Arabidopsis thaliana (Mouse-ear cress).